A 342-amino-acid chain; its full sequence is Manganese-dependent ADP-ribose/CDP-alcohol diphosphatase (342 aa).

Methionine 1 is subject to N-acetylmethionine. 7 residues coordinate Zn(2+): aspartate 25, glutamine 27, aspartate 74, asparagine 110, histidine 241, histidine 278, and histidine 280.

Belongs to the ADPRibase-Mn family. As to quaternary structure, monomer. Mg(2+) serves as cofactor.

The catalysed reaction is CDP-choline + H2O = phosphocholine + CMP + 2 H(+). It catalyses the reaction ADP-D-ribose + H2O = D-ribose 5-phosphate + AMP + 2 H(+). The enzyme catalyses CDP-glycerol + H2O = sn-glycerol 3-phosphate + CMP + 2 H(+). Hydrolyzes ADP-ribose, IDP-ribose, CDP-glycerol, CDP-choline and CDP-ethanolamine, but not other non-reducing ADP-sugars or CDP-glucose. May be involved in immune cell signaling as suggested by the second-messenger role of ADP-ribose, which activates TRPM2 as a mediator of oxidative/nitrosative stress. The protein is Manganese-dependent ADP-ribose/CDP-alcohol diphosphatase (ADPRM) of Homo sapiens (Human).